The sequence spans 193 residues: DNA dC-&gt;dU-editing enzyme APOBEC-3H (193 aa).

The 103-residue stretch at 24-126 (YRRKTYLCYQ…WKYQQGLRHL (103 aa)) folds into the CMP/dCMP-type deaminase domain. A Zn(2+)-binding site is contributed by His-54. The active-site Proton donor is Glu-56. Zn(2+)-binding residues include Cys-85 and Cys-88.

The protein belongs to the cytidine and deoxycytidylate deaminase family. In terms of assembly, homodimer. It depends on Zn(2+) as a cofactor. Expressed in peripheral blood mononuclear cells.

The protein resides in the cytoplasm. It catalyses the reaction a 2'-deoxycytidine in single-stranded DNA + H2O + H(+) = a 2'-deoxyuridine in single-stranded DNA + NH4(+). Its function is as follows. DNA deaminase (cytidine deaminase) which acts as an inhibitor of retrovirus replication and retrotransposon mobility via deaminase-dependent and -independent mechanisms. Selectively targets single-stranded DNA and does not deaminate double-stranded DNA or single- or double-stranded RNA. Exhibits single-stranded DNA deaminase activity (in vitro). Incorporates into the released virions of the virion infectivity factor (vif)-deficient feline immunodeficiency virus (FIV) and suppresses FIV infectivity, probably in a deaminase-dependent manner (in vitro). Induces G-to-A hypermutations in vif-deficient FIV (in vitro). The APOBEC3H/APOBEC3Z3 haplotype 5 exhibits antiviral activity against vif-proficient FIV, strains Petaluma, C36 and Shizuoka (in vitro). Does not exhibit inhibitory activity against feline leukemia virus (FeLV), feline endogenous retrovirus (RD-114 virus) or a long interspersed nuclear element-1 (LINE-1) retrotransposon (in vitro). This chain is DNA dC-&gt;dU-editing enzyme APOBEC-3H, found in Felis catus (Cat).